Reading from the N-terminus, the 206-residue chain is Small ribosomal subunit protein uS4 (206 aa).

Positions 96–156 (GRLDNVVYRM…EKAKKQSRVK (61 aa)) constitute an S4 RNA-binding domain.

This sequence belongs to the universal ribosomal protein uS4 family. In terms of assembly, part of the 30S ribosomal subunit. Contacts protein S5. The interaction surface between S4 and S5 is involved in control of translational fidelity.

Functionally, one of the primary rRNA binding proteins, it binds directly to 16S rRNA where it nucleates assembly of the body of the 30S subunit. Its function is as follows. With S5 and S12 plays an important role in translational accuracy. This is Small ribosomal subunit protein uS4 from Klebsiella pneumoniae (strain 342).